The primary structure comprises 270 residues: Formamidopyrimidine-DNA glycosylase (270 aa).

Pro2 (schiff-base intermediate with DNA) is an active-site residue. The active-site Proton donor is the Glu3. The active-site Proton donor; for beta-elimination activity is the Lys58. DNA-binding residues include His91, Arg110, and Arg151. The segment at 236 to 270 (LVYGRDGLPCPNCGRALKHATIGQRASVWCSHCQR) adopts an FPG-type zinc-finger fold. Arg260 serves as the catalytic Proton donor; for delta-elimination activity.

The protein belongs to the FPG family. In terms of assembly, monomer. The cofactor is Zn(2+).

The enzyme catalyses Hydrolysis of DNA containing ring-opened 7-methylguanine residues, releasing 2,6-diamino-4-hydroxy-5-(N-methyl)formamidopyrimidine.. The catalysed reaction is 2'-deoxyribonucleotide-(2'-deoxyribose 5'-phosphate)-2'-deoxyribonucleotide-DNA = a 3'-end 2'-deoxyribonucleotide-(2,3-dehydro-2,3-deoxyribose 5'-phosphate)-DNA + a 5'-end 5'-phospho-2'-deoxyribonucleoside-DNA + H(+). In terms of biological role, involved in base excision repair of DNA damaged by oxidation or by mutagenic agents. Acts as a DNA glycosylase that recognizes and removes damaged bases. Has a preference for oxidized purines, such as 7,8-dihydro-8-oxoguanine (8-oxoG). Has AP (apurinic/apyrimidinic) lyase activity and introduces nicks in the DNA strand. Cleaves the DNA backbone by beta-delta elimination to generate a single-strand break at the site of the removed base with both 3'- and 5'-phosphates. In Stenotrophomonas maltophilia (strain R551-3), this protein is Formamidopyrimidine-DNA glycosylase.